The following is a 941-amino-acid chain: Bifunctional glutamine synthetase adenylyltransferase/adenylyl-removing enzyme (941 aa).

Residues 1–437 (MPMPTVSMSP…AAEFAELLAP (437 aa)) form an adenylyl removase region. An adenylyl transferase region spans residues 444–941 (PDALADYWRA…FPLGKDETAL (498 aa)).

This sequence belongs to the GlnE family. It depends on Mg(2+) as a cofactor.

The catalysed reaction is [glutamine synthetase]-O(4)-(5'-adenylyl)-L-tyrosine + phosphate = [glutamine synthetase]-L-tyrosine + ADP. The enzyme catalyses [glutamine synthetase]-L-tyrosine + ATP = [glutamine synthetase]-O(4)-(5'-adenylyl)-L-tyrosine + diphosphate. Functionally, involved in the regulation of glutamine synthetase GlnA, a key enzyme in the process to assimilate ammonia. When cellular nitrogen levels are high, the C-terminal adenylyl transferase (AT) inactivates GlnA by covalent transfer of an adenylyl group from ATP to specific tyrosine residue of GlnA, thus reducing its activity. Conversely, when nitrogen levels are low, the N-terminal adenylyl removase (AR) activates GlnA by removing the adenylyl group by phosphorolysis, increasing its activity. The regulatory region of GlnE binds the signal transduction protein PII (GlnB) which indicates the nitrogen status of the cell. The polypeptide is Bifunctional glutamine synthetase adenylyltransferase/adenylyl-removing enzyme (Xanthomonas axonopodis pv. citri (strain 306)).